A 154-amino-acid chain; its full sequence is Myoglobin (154 aa).

The region spanning 2–148 (GLSDGEWQLV…FRNDIAAKYK (147 aa)) is the Globin domain. Phosphoserine is present on S4. H65 lines the nitrite pocket. H65 contributes to the O2 binding site. A Phosphothreonine modification is found at T68. H94 lines the heme b pocket.

It belongs to the globin family. As to quaternary structure, monomeric.

It is found in the cytoplasm. The protein localises to the sarcoplasm. It catalyses the reaction Fe(III)-heme b-[protein] + nitric oxide + H2O = Fe(II)-heme b-[protein] + nitrite + 2 H(+). The enzyme catalyses H2O2 + AH2 = A + 2 H2O. Functionally, monomeric heme protein which primary function is to store oxygen and facilitate its diffusion within muscle tissues. Reversibly binds oxygen through a pentacoordinated heme iron and enables its timely and efficient release as needed during periods of heightened demand. Depending on the oxidative conditions of tissues and cells, and in addition to its ability to bind oxygen, it also has a nitrite reductase activity whereby it regulates the production of bioactive nitric oxide. Under stress conditions, like hypoxia and anoxia, it also protects cells against reactive oxygen species thanks to its pseudoperoxidase activity. This chain is Myoglobin (MB), found in Spalax ehrenbergi (Middle East blind mole rat).